The primary structure comprises 676 residues: Period circadian protein (676 aa).

The segment covering 1–34 (KVSDSAYSNSCSNSQSQRSGSSKSRLSGSHSSGS) has biased composition (low complexity). Residues 1–161 (KVSDSAYSNS…AAQSFPIPSP (161 aa)) form a disordered region. Residues 53 to 66 (KRNKDKSRKKKKNK) carry the Nuclear localization signal motif. Residues 53–66 (KRNKDKSRKKKKNK) are compositionally biased toward basic residues. Residues 108-120 (ELQDQQHGEDHSE) are compositionally biased toward basic and acidic residues. PAS domains lie at 224–359 (DSFC…ATPI) and 377–483 (FAIR…RVFQ). Positions 583 to 676 (TNTSIAGTGG…VTLTESLLNK (94 aa)) are disordered. 26 consecutive repeat copies span residues 589–590 (GT), 592–593 (GT), 594–595 (GT), 596–597 (GT), 598–599 (GT), 600–601 (GT), 602–603 (GT), 604–605 (GT), 606–607 (GT), 608–609 (GT), 610–611 (GT), 612–613 (GT), 614–615 (GT), 616–617 (GT), 618–619 (GT), 620–621 (GT), 622–623 (GT), 624–625 (GT), 626–627 (GT), 628–629 (GT), 630–631 (GT), 632–633 (GT), 634–635 (GT), 636–637 (GT), 638–639 (GT), and 640–641 (GT). Residues 589–643 (GTGGTGTGTGTGTGTGTGTGTGTGTGTGTGTGTGTGTGTGTGTGTGTGTGTGTGN) are compositionally biased toward gly residues. A 28 X 2 AA approximate tandem repeats of G-T region spans residues 589–645 (GTGGTGTGTGTGTGTGTGTGTGTGTGTGTGTGTGTGTGTGTGTGTGTGTGTGTGNGT). One copy of the 27; approximate repeat lies at 642-643 (GN). The stretch at 644–645 (GT) is repeat 28. Residues 644–654 (GTNSCTGTGTT) show a composition bias toward low complexity.

As to quaternary structure, forms a heterodimer with timeless (TIM); the complex then translocates into the nucleus. Phosphorylated with a circadian rhythmicity, probably by the double-time protein (dbt). Phosphorylation could be implicated in the stability of per monomer and in the formation of heterodimer per-tim.

The protein localises to the nucleus. Its subcellular location is the cytoplasm. It is found in the perinuclear region. Essential for biological clock functions. Determines the period length of circadian and ultradian rhythms; an increase in PER dosage leads to shortened circadian rhythms and a decrease leads to lengthened circadian rhythms. Essential for the circadian rhythmicity of locomotor activity, eclosion behavior, and for the rhythmic component of the male courtship song that originates in the thoracic nervous system. The biological cycle depends on the rhythmic formation and nuclear localization of the TIM-PER complex. Light induces the degradation of TIM, which promotes elimination of PER. Nuclear activity of the heterodimer coordinatively regulates PER and TIM transcription through a negative feedback loop. Behaves as a negative element in circadian transcriptional loop. Does not appear to bind DNA, suggesting indirect transcriptional inhibition. This Drosophila mauritiana (Fruit fly) protein is Period circadian protein (per).